The following is a 124-amino-acid chain: Small ribosomal subunit protein uS13 (124 aa).

Positions 87–124 (GSYRGNRHRKRLPVRGQRTKTNSRTRKGKRRTVGSKTK) are disordered. A compositionally biased stretch (basic residues) spans 91-124 (GNRHRKRLPVRGQRTKTNSRTRKGKRRTVGSKTK).

The protein belongs to the universal ribosomal protein uS13 family. In terms of assembly, part of the 30S ribosomal subunit. Forms a loose heterodimer with protein S19. Forms two bridges to the 50S subunit in the 70S ribosome.

In terms of biological role, located at the top of the head of the 30S subunit, it contacts several helices of the 16S rRNA. In the 70S ribosome it contacts the 23S rRNA (bridge B1a) and protein L5 of the 50S subunit (bridge B1b), connecting the 2 subunits; these bridges are implicated in subunit movement. Contacts the tRNAs in the A and P-sites. The protein is Small ribosomal subunit protein uS13 of Elusimicrobium minutum (strain Pei191).